Reading from the N-terminus, the 49-residue chain is Large ribosomal subunit protein bL33A (49 aa).

Residues 21 to 49 (KNKRNNPERVEMKKYCSRDNKHTLHRETK) are disordered. The segment covering 25 to 49 (NNPERVEMKKYCSRDNKHTLHRETK) has biased composition (basic and acidic residues).

The protein belongs to the bacterial ribosomal protein bL33 family.

This is Large ribosomal subunit protein bL33A from Staphylococcus epidermidis (strain ATCC 35984 / DSM 28319 / BCRC 17069 / CCUG 31568 / BM 3577 / RP62A).